A 102-amino-acid chain; its full sequence is Small ribosomal subunit protein uS10 (102 aa).

The protein belongs to the universal ribosomal protein uS10 family. In terms of assembly, part of the 30S ribosomal subunit.

Involved in the binding of tRNA to the ribosomes. This chain is Small ribosomal subunit protein uS10, found in Exiguobacterium sp. (strain ATCC BAA-1283 / AT1b).